A 196-amino-acid chain; its full sequence is Ribosomal RNA large subunit methyltransferase E (196 aa).

S-adenosyl-L-methionine contacts are provided by glycine 52, tryptophan 54, aspartate 72, aspartate 88, and aspartate 111. The Proton acceptor role is filled by lysine 151.

It belongs to the class I-like SAM-binding methyltransferase superfamily. RNA methyltransferase RlmE family.

The protein resides in the cytoplasm. The catalysed reaction is uridine(2552) in 23S rRNA + S-adenosyl-L-methionine = 2'-O-methyluridine(2552) in 23S rRNA + S-adenosyl-L-homocysteine + H(+). Specifically methylates the uridine in position 2552 of 23S rRNA at the 2'-O position of the ribose in the fully assembled 50S ribosomal subunit. In Cenarchaeum symbiosum (strain A), this protein is Ribosomal RNA large subunit methyltransferase E.